The chain runs to 333 residues: Biotin synthase (333 aa).

Residues 47 to 273 (YYGNKVKLNM…MNPTKEIRIA (227 aa)) form the Radical SAM core domain. Cys65, Cys69, and Cys72 together coordinate [4Fe-4S] cluster. [2Fe-2S] cluster-binding residues include Cys109, Cys141, Cys201, and Arg271.

This sequence belongs to the radical SAM superfamily. Biotin synthase family. As to quaternary structure, homodimer. [4Fe-4S] cluster is required as a cofactor. Requires [2Fe-2S] cluster as cofactor.

The enzyme catalyses (4R,5S)-dethiobiotin + (sulfur carrier)-SH + 2 reduced [2Fe-2S]-[ferredoxin] + 2 S-adenosyl-L-methionine = (sulfur carrier)-H + biotin + 2 5'-deoxyadenosine + 2 L-methionine + 2 oxidized [2Fe-2S]-[ferredoxin]. It functions in the pathway cofactor biosynthesis; biotin biosynthesis; biotin from 7,8-diaminononanoate: step 2/2. Catalyzes the conversion of dethiobiotin (DTB) to biotin by the insertion of a sulfur atom into dethiobiotin via a radical-based mechanism. The chain is Biotin synthase from Geobacillus kaustophilus (strain HTA426).